Consider the following 200-residue polypeptide: Probable GTP-binding protein EngB (200 aa).

Positions 25–199 (SGYEVAFAGR…ISLLDRWYEW (175 aa)) constitute an EngB-type G domain. Residues 33–40 (GRSNAGKS), 60–64 (GRTQL), 78–81 (DLPG), 145–148 (TKAD), and 178–180 (FSS) contribute to the GTP site. Mg(2+) contacts are provided by Ser40 and Thr62.

Belongs to the TRAFAC class TrmE-Era-EngA-EngB-Septin-like GTPase superfamily. EngB GTPase family. It depends on Mg(2+) as a cofactor.

Its function is as follows. Necessary for normal cell division and for the maintenance of normal septation. The sequence is that of Probable GTP-binding protein EngB from Legionella pneumophila (strain Corby).